The chain runs to 128 residues: Protein FAM229A (128 aa).

Residues 1 to 96 (MQSSPSTLGP…VATDQNPVRP (96 aa)) are disordered.

This sequence belongs to the FAM229 family.

This Mus musculus (Mouse) protein is Protein FAM229A (Fam229a).